Reading from the N-terminus, the 645-residue chain is uncharacterized protein (645 aa).

This sequence belongs to the mycobacterial PPE family.

This is an uncharacterized protein from Mycobacterium tuberculosis (strain CDC 1551 / Oshkosh).